We begin with the raw amino-acid sequence, 212 residues long: Large ribosomal subunit protein uL1 (212 aa).

It belongs to the universal ribosomal protein uL1 family. As to quaternary structure, part of the 50S ribosomal subunit.

Functionally, binds directly to 23S rRNA. Probably involved in E site tRNA release. In terms of biological role, protein L1 is also a translational repressor protein, it controls the translation of its operon by binding to its mRNA. In Haloquadratum walsbyi (strain DSM 16790 / HBSQ001), this protein is Large ribosomal subunit protein uL1.